A 349-amino-acid chain; its full sequence is Fructose-1,6-bisphosphatase class 1 (349 aa).

Residues Glu113, Asp135, Ile137, and Asp138 each contribute to the Mg(2+) site. Residues Asp138–Ser141, Asn230, Tyr258, and Lys288 each bind substrate. Residue Glu294 coordinates Mg(2+).

Belongs to the FBPase class 1 family. Homotetramer. It depends on Mg(2+) as a cofactor.

It localises to the cytoplasm. It carries out the reaction beta-D-fructose 1,6-bisphosphate + H2O = beta-D-fructose 6-phosphate + phosphate. The protein operates within carbohydrate biosynthesis; Calvin cycle. The protein is Fructose-1,6-bisphosphatase class 1 of Nostoc punctiforme (strain ATCC 29133 / PCC 73102).